Consider the following 271-residue polypeptide: Putative hydro-lyase jk0403 (271 aa).

The protein belongs to the D-glutamate cyclase family.

This chain is Putative hydro-lyase jk0403, found in Corynebacterium jeikeium (strain K411).